Reading from the N-terminus, the 596-residue chain is Aspartic proteinase yapsin-7 (596 aa).

Positions 1 to 25 (MTCLILWYLWLISTFQLEFATASTA) are cleaved as a signal peptide. N-linked (GlcNAc...) asparagine glycans are attached at residues N26 and N59. At 26–575 (NTTTTAKSGT…SPYTFNKDPA (550 aa)) the chain is on the lumenal side. In terms of domain architecture, Peptidase A1 spans 56 to 440 (YYVNSTFGTP…DLEDNTIAIA (385 aa)). Residue D74 is part of the active site. 7 N-linked (GlcNAc...) asparagine glycosylation sites follow: N106, N131, N140, N143, N148, N175, and N308. The active site involves D321. N-linked (GlcNAc...) asparagine glycosylation is found at N391, N455, N478, N484, N549, and N552. A helical membrane pass occupies residues 576 to 596 (GHVTRIASLLLLSIFSILIVL).

The protein belongs to the peptidase A1 family.

Its subcellular location is the cytoplasm. It is found in the endoplasmic reticulum membrane. This Saccharomyces cerevisiae (strain ATCC 204508 / S288c) (Baker's yeast) protein is Aspartic proteinase yapsin-7 (YPS7).